Reading from the N-terminus, the 491-residue chain is tRNA-2-methylthio-N(6)-dimethylallyladenosine synthase (491 aa).

Residues 54 to 172 (KTYHIKTFGC…ILNLLEQVIF (119 aa)) enclose the MTTase N-terminal domain. Cys-63, Cys-99, Cys-133, Cys-209, Cys-213, and Cys-216 together coordinate [4Fe-4S] cluster. One can recognise a Radical SAM core domain in the interval 195 to 426 (RTNNLKGFVN…NEMVKTFSKK (232 aa)). The 63-residue stretch at 429 to 491 (EKYVNKVLDV…RFTLNGKMID (63 aa)) folds into the TRAM domain.

Belongs to the methylthiotransferase family. MiaB subfamily. In terms of assembly, monomer. Requires [4Fe-4S] cluster as cofactor.

Its subcellular location is the cytoplasm. The catalysed reaction is N(6)-dimethylallyladenosine(37) in tRNA + (sulfur carrier)-SH + AH2 + 2 S-adenosyl-L-methionine = 2-methylsulfanyl-N(6)-dimethylallyladenosine(37) in tRNA + (sulfur carrier)-H + 5'-deoxyadenosine + L-methionine + A + S-adenosyl-L-homocysteine + 2 H(+). Catalyzes the methylthiolation of N6-(dimethylallyl)adenosine (i(6)A), leading to the formation of 2-methylthio-N6-(dimethylallyl)adenosine (ms(2)i(6)A) at position 37 in tRNAs that read codons beginning with uridine. In Malacoplasma penetrans (strain HF-2) (Mycoplasma penetrans), this protein is tRNA-2-methylthio-N(6)-dimethylallyladenosine synthase.